We begin with the raw amino-acid sequence, 746 residues long: Rhizobactin receptor (746 aa).

The first 26 residues, 1–26, serve as a signal peptide directing secretion; the sequence is MGNNENGGISFCVFVVVIGFGTGAVA. The short motif at 40-47 is the TonB box element; the sequence is EEIVVTGG. Positions 52–163 constitute a TBDR plug domain; it reads QISEIARTIY…TGGIINIITK (112 aa). The region spanning 169–746 is the TBDR beta-barrel domain; sequence EPGLHAEVTG…TFAVSLTKVF (578 aa). A TonB C-terminal box motif is present at residues 729 to 746; sequence FDYKGRGRTFAVSLTKVF.

It belongs to the TonB-dependent receptor family.

The protein resides in the cell outer membrane. Its function is as follows. Receptor for the siderophore rhizobactin. This Rhizobium meliloti (strain 1021) (Ensifer meliloti) protein is Rhizobactin receptor (rhtA).